The chain runs to 588 residues: Phomenoic acid biosynthesis cluster cytochrome P450 monooxygenase (588 aa).

The N-terminal stretch at 1 to 21 (MSFARIFITILLLFILRRAFK) is a signal peptide. Residue N293 is glycosylated (N-linked (GlcNAc...) asparagine). Positions 467-486 (HQSDPDRFKPSPDAPDEKLF) are enriched in basic and acidic residues. Residues 467–490 (HQSDPDRFKPSPDAPDEKLFRPSR) form a disordered region. C519 contributes to the heme binding site.

The protein belongs to the cytochrome P450 family. Heme is required as a cofactor.

The protein operates within secondary metabolite biosynthesis. In terms of biological role, cytochrome P450 monooxygenase; part of the gene cluster that mediates the biosynthesis of phomenoic acid, a long chain aliphatic carboxylic acid that does not appear to be essential for pathogenicity but may play a role in allowing to outcompete other fungi in the environmental niche via its antifungal properties. The polyketide synthase produces the long methylated aliphatic carboxylic acid chain of phomenoic acid. The cluster-specific cytochrome P450 monooxygenase may then hydroxylate the methyl group of carbon 31. The putative dehydrogenase YogA, which has no obvious role in phomenoic acid biosynthesis, may further modify phomenoic acid to produce a compound not identified yet. This Leptosphaeria maculans (strain JN3 / isolate v23.1.3 / race Av1-4-5-6-7-8) (Blackleg fungus) protein is Phomenoic acid biosynthesis cluster cytochrome P450 monooxygenase.